The primary structure comprises 489 residues: Cysteine--tRNA ligase (489 aa).

Cysteine 27 is a binding site for Zn(2+). Residues 29–39 (VTVYDLCHLGH) carry the 'HIGH' region motif. Zn(2+)-binding residues include cysteine 211, histidine 236, and glutamate 240. The 'KMSKS' region motif lies at 268–272 (KMSKS). Lysine 271 contacts ATP.

This sequence belongs to the class-I aminoacyl-tRNA synthetase family. Monomer. Zn(2+) is required as a cofactor.

Its subcellular location is the cytoplasm. The enzyme catalyses tRNA(Cys) + L-cysteine + ATP = L-cysteinyl-tRNA(Cys) + AMP + diphosphate. This chain is Cysteine--tRNA ligase, found in Prochlorococcus marinus (strain MIT 9312).